A 96-amino-acid polypeptide reads, in one-letter code: Large ribosomal subunit protein uL4 (96 aa).

The interval 77–96 (RAPNKKVKRRELKKNPLKNL) is disordered. The segment covering 79 to 96 (PNKKVKRRELKKNPLKNL) has biased composition (basic residues).

This sequence belongs to the universal ribosomal protein uL4 family. In terms of assembly, component of the large ribosomal subunit.

Its subcellular location is the cytoplasm. In terms of biological role, component of the large ribosomal subunit. The ribosome is a large ribonucleoprotein complex responsible for the synthesis of proteins in the cell. In Xenopus tropicalis (Western clawed frog), this protein is Large ribosomal subunit protein uL4 (rpl4).